A 577-amino-acid polypeptide reads, in one-letter code: Arginine--tRNA ligase (577 aa).

A 'HIGH' region motif is present at residues 122–132; the sequence is PNVAKEMHVGH.

The protein belongs to the class-I aminoacyl-tRNA synthetase family. In terms of assembly, monomer.

The protein localises to the cytoplasm. The catalysed reaction is tRNA(Arg) + L-arginine + ATP = L-arginyl-tRNA(Arg) + AMP + diphosphate. The protein is Arginine--tRNA ligase of Escherichia coli O139:H28 (strain E24377A / ETEC).